Reading from the N-terminus, the 568-residue chain is Dihydroxy-acid dehydratase (568 aa).

Cys59 is a [2Fe-2S] cluster binding site. Asp91 lines the Mg(2+) pocket. Position 132 (Cys132) interacts with [2Fe-2S] cluster. 2 residues coordinate Mg(2+): Asp133 and Lys134. The residue at position 134 (Lys134) is an N6-carboxylysine. Cys204 provides a ligand contact to [2Fe-2S] cluster. Glu456 lines the Mg(2+) pocket. Residue Ser482 is the Proton acceptor of the active site.

It belongs to the IlvD/Edd family. Homodimer. [2Fe-2S] cluster is required as a cofactor. It depends on Mg(2+) as a cofactor.

The catalysed reaction is (2R)-2,3-dihydroxy-3-methylbutanoate = 3-methyl-2-oxobutanoate + H2O. It carries out the reaction (2R,3R)-2,3-dihydroxy-3-methylpentanoate = (S)-3-methyl-2-oxopentanoate + H2O. It functions in the pathway amino-acid biosynthesis; L-isoleucine biosynthesis; L-isoleucine from 2-oxobutanoate: step 3/4. The protein operates within amino-acid biosynthesis; L-valine biosynthesis; L-valine from pyruvate: step 3/4. Functionally, functions in the biosynthesis of branched-chain amino acids. Catalyzes the dehydration of (2R,3R)-2,3-dihydroxy-3-methylpentanoate (2,3-dihydroxy-3-methylvalerate) into 2-oxo-3-methylpentanoate (2-oxo-3-methylvalerate) and of (2R)-2,3-dihydroxy-3-methylbutanoate (2,3-dihydroxyisovalerate) into 2-oxo-3-methylbutanoate (2-oxoisovalerate), the penultimate precursor to L-isoleucine and L-valine, respectively. This Verminephrobacter eiseniae (strain EF01-2) protein is Dihydroxy-acid dehydratase.